The sequence spans 474 residues: Bifunctional protein HldE (474 aa).

Residues 1–318 (MKLSMPRFDQ…RAIQREEGSE (318 aa)) form a ribokinase region. Residue 194–197 (NLSE) coordinates ATP. Residue D263 is part of the active site. A cytidylyltransferase region spans residues 343-474 (FTNGCFDILH…AIVEKIRGQG (132 aa)).

The protein in the N-terminal section; belongs to the carbohydrate kinase PfkB family. In the C-terminal section; belongs to the cytidylyltransferase family. Homodimer.

It catalyses the reaction D-glycero-beta-D-manno-heptose 7-phosphate + ATP = D-glycero-beta-D-manno-heptose 1,7-bisphosphate + ADP + H(+). The catalysed reaction is D-glycero-beta-D-manno-heptose 1-phosphate + ATP + H(+) = ADP-D-glycero-beta-D-manno-heptose + diphosphate. It functions in the pathway nucleotide-sugar biosynthesis; ADP-L-glycero-beta-D-manno-heptose biosynthesis; ADP-L-glycero-beta-D-manno-heptose from D-glycero-beta-D-manno-heptose 7-phosphate: step 1/4. The protein operates within nucleotide-sugar biosynthesis; ADP-L-glycero-beta-D-manno-heptose biosynthesis; ADP-L-glycero-beta-D-manno-heptose from D-glycero-beta-D-manno-heptose 7-phosphate: step 3/4. In terms of biological role, catalyzes the phosphorylation of D-glycero-D-manno-heptose 7-phosphate at the C-1 position to selectively form D-glycero-beta-D-manno-heptose-1,7-bisphosphate. Catalyzes the ADP transfer from ATP to D-glycero-beta-D-manno-heptose 1-phosphate, yielding ADP-D-glycero-beta-D-manno-heptose. The chain is Bifunctional protein HldE from Pseudomonas syringae pv. tomato (strain ATCC BAA-871 / DC3000).